A 401-amino-acid polypeptide reads, in one-letter code: Ribosomal RNA dihydrouridine synthase (401 aa).

9 residues coordinate FAD: Ala15, Asp34, Asn35, Arg41, Gly47, Asn52, Val132, Glu371, and Phe384.

This sequence belongs to the BaiN/RdsA family. RdsA subfamily. FAD is required as a cofactor.

The enzyme catalyses a 5,6-dihydrouridine in mRNA + NAD(+) = a uridine in mRNA + NADH + H(+). In terms of biological role, catalyzes the synthesis of 5,6-dihydrouridine (D) at position 2449 in 23S rRNA. In Haemophilus influenzae (strain ATCC 51907 / DSM 11121 / KW20 / Rd), this protein is Ribosomal RNA dihydrouridine synthase.